We begin with the raw amino-acid sequence, 732 residues long: E3 ubiquitin-protein ligase RNF19B (732 aa).

Positions 1 to 109 (MGSEKDSESP…PEEDEAAEGG (109 aa)) are disordered. The interval 1–315 (MGSEKDSESP…VCGCEFCWLC (315 aa)) is required for ubiquitin ligase activity and for protection against staurosporin-induced cell death. The span at 54 to 71 (AEPPPPAAPPPPPPPAPA) shows a compositional bias: pro residues. Positions 72–99 (PVEAQAPPVEALPSEPAAEAEAEAVAAG) are enriched in low complexity. Residues 100–109 (PEEDEAAEGG) are compositionally biased toward acidic residues. Positions 112-334 (EEVECPLCLV…LSPSGCTFWG (223 aa)) are TRIAD supradomain. Zn(2+) is bound by residues cysteine 116, cysteine 119, cysteine 139, cysteine 142, cysteine 203, cysteine 208, cysteine 225, cysteine 230, cysteine 235, cysteine 238, histidine 243, cysteine 248, cysteine 284, and cysteine 287. Residues 116–165 (CPLCLVRLPPERAPRLLSCPHRSCRDCLRHYLRLEISESRVPISCPECSE) form an RING-type 1 zinc finger. The IBR-type zinc finger occupies 183 to 248 (HKYEEFMLRR…KQIWHPNQTC (66 aa)). The RING-type 2; atypical zinc finger occupies 284–315 (CPRCSAYIIKMNDGSCNHMTCAVCGCEFCWLC). Residue cysteine 299 is part of the active site. Cysteine 304, cysteine 307, cysteine 312, cysteine 315, histidine 323, and cysteine 330 together coordinate Zn(2+). The next 2 helical transmembrane spans lie at 351–371 (LIGAPVGISLIAGIAIPAMVI) and 412–432 (VIAAVSVGIGVPIMLAYVYGV). Disordered regions lie at residues 598 to 644 (QLVS…QSCE) and 660 to 732 (QPES…YEVE). Over residues 674–683 (QSDDVPDITS) the composition is skewed to acidic residues.

The protein belongs to the RBR family. RNF19 subfamily. Interacts with UBE2L3, UBE2L6 and UCKL1. In terms of tissue distribution, expressed specifically in natural killer cells, activated macrophages and cytotoxic T-cells. Present in macrophages (at protein level). Ubiquitously expressed with high expression in testis.

It localises to the cytoplasmic granule membrane. It is found in the endoplasmic reticulum membrane. The catalysed reaction is [E2 ubiquitin-conjugating enzyme]-S-ubiquitinyl-L-cysteine + [acceptor protein]-L-lysine = [E2 ubiquitin-conjugating enzyme]-L-cysteine + [acceptor protein]-N(6)-ubiquitinyl-L-lysine.. The protein operates within protein modification; protein ubiquitination. E3 ubiquitin-protein ligase which accepts ubiquitin from E2 ubiquitin-conjugating enzymes UBE2L3 and UBE2L6 in the form of a thioester and then directly transfers the ubiquitin to targeted substrates, such as UCKL1. Involved in the cytolytic activity of natural killer cells and cytotoxic T-cells. Protects against staurosporin-induced cell death. In Mus musculus (Mouse), this protein is E3 ubiquitin-protein ligase RNF19B (Rnf19b).